The primary structure comprises 434 residues: 3-ketoacyl-CoA thiolase A, peroxisomal (434 aa).

The N-terminal 36 residues, 1–36 (MSESVGRTSAMHRLQVVLGHLAGRPESSSALQAAPC), are a transit peptide targeting the peroxisome. The PTS2-type peroxisomal targeting signal stretch occupies residues 11-36 (MHRLQVVLGHLAGRPESSSALQAAPC). The active-site Acyl-thioester intermediate is Cys133. Lys183 and Lys244 each carry N6-acetyllysine. Active-site proton acceptor residues include His387 and Cys418.

This sequence belongs to the thiolase-like superfamily. Thiolase family. In terms of assembly, homodimer. Interacts (via PTS2-type peroxisomal targeting signal region) with PEX7; leading to its translocation into peroxisomes.

Its subcellular location is the peroxisome. It carries out the reaction an acyl-CoA + acetyl-CoA = a 3-oxoacyl-CoA + CoA. It catalyses the reaction 2 acetyl-CoA = acetoacetyl-CoA + CoA. The catalysed reaction is tetradecanoyl-CoA + acetyl-CoA = 3-oxohexadecanoyl-CoA + CoA. The enzyme catalyses hexanoyl-CoA + acetyl-CoA = 3-oxooctanoyl-CoA + CoA. It carries out the reaction 3-oxohexadecanedioyl-CoA + CoA = tetradecanedioyl-CoA + acetyl-CoA. It catalyses the reaction 3-oxo-(6Z,9Z,12Z,15Z,18Z,21Z)-tetracosahexaenoyl-CoA + CoA = (4Z,7Z,10Z,13Z,16Z,19Z)-docosahexaenoyl-CoA + acetyl-CoA. It functions in the pathway lipid metabolism; peroxisomal fatty acid beta-oxidation. In terms of biological role, responsible for the thiolytic cleavage of straight chain 3-keto fatty acyl-CoAs (3-oxoacyl-CoAs). Plays an important role in fatty acid peroxisomal beta-oxidation. Catalyzes the cleavage of short, medium, long, and very long straight chain 3-oxoacyl-CoAs. Medium chain straight 3-oxoacyl-CoAs are preferred substrates. The chain is 3-ketoacyl-CoA thiolase A, peroxisomal from Rattus norvegicus (Rat).